A 130-amino-acid polypeptide reads, in one-letter code: Small ribosomal subunit protein uS8 (130 aa).

The protein belongs to the universal ribosomal protein uS8 family. Part of the 30S ribosomal subunit. Contacts proteins S5 and S12.

Functionally, one of the primary rRNA binding proteins, it binds directly to 16S rRNA central domain where it helps coordinate assembly of the platform of the 30S subunit. This chain is Small ribosomal subunit protein uS8, found in Buchnera aphidicola subsp. Acyrthosiphon kondoi (Acyrthosiphon kondoi symbiotic bacterium).